An 896-amino-acid chain; its full sequence is Sodium/hydrogen exchanger 5 (896 aa).

The Cytoplasmic segment spans residues 1–45 (MLRAALSLLALPLAGAAEEPTQKPESPGEPPPGLELFRWQWHEVE). The chain crosses the membrane as a helical span at residues 46–66 (APYLVALWILVASLAKIVFHL). Over 67-73 (SRKVTSL) the chain is Extracellular. The chain crosses the membrane as a helical span at residues 74-94 (VPESCLLILLGLVLGGIVLAV). Residues 95–103 (AKKAEYQLE) lie on the Cytoplasmic side of the membrane. Residues 104 to 124 (PGTFFLFLLPPIVLDSGYFMP) form a helical membrane-spanning segment. The Extracellular portion of the chain corresponds to 125–134 (SRLFFDNLGA). Residues 135 to 155 (ILTYAVVGTLWNAFTTGAALW) form a helical membrane-spanning segment. Over 156–173 (GLQQAGLVAPRVQAGLLD) the chain is Cytoplasmic. A helical membrane pass occupies residues 174 to 194 (FLLFGSLISAVDPVAVLAVFE). Residues 195–200 (EVHVNE) lie on the Extracellular side of the membrane. The N-linked (GlcNAc...) asparagine glycan is linked to Asn199. A helical membrane pass occupies residues 201-221 (TLFIIVFGESLLNDAVTVVLY). Residues 222-246 (KVCNSFVEMGSANVQATDYLKGVAS) lie on the Cytoplasmic side of the membrane. A helical membrane pass occupies residues 247 to 267 (LFVVSLGGAAVGLVFAFLLAL). Topologically, residues 268-276 (TTRFTKRVR) are extracellular. A helical membrane pass occupies residues 277–297 (IIEPLLVFLLAYAAYLTAEMA). The Cytoplasmic segment spans residues 298-331 (SLSAILAVTMCGLGCKKYVEANISHKSRTTVKYT). A helical transmembrane segment spans residues 332–352 (MKTLASCAETVIFMLLGISAV). Over 353–360 (DSSKWAWD) the chain is Extracellular. Residues 361–381 (SGLVLGTLIFILFFRALGVVL) form a helical membrane-spanning segment. The Cytoplasmic segment spans residues 382-398 (QTWVLNQFRLVPLDKID). Residues 399-419 (QVVMSYGGLRGAVAFALVILL) traverse the membrane as a helical segment. The Extracellular segment spans residues 420 to 428 (DRTKVPAKD). A helical membrane pass occupies residues 429–449 (YFVATTIVVVFFTVIVQGLTI). The Cytoplasmic portion of the chain corresponds to 450-896 (KPLVKWLKVK…CIQFNRGSRL (447 aa)). A required for interaction with ARRB2 region spans residues 576 to 721 (GSGACLDLQV…SETEKEDDEG (146 aa)). Disordered regions lie at residues 658 to 686 (TKSKPRPRKTGRRKKDGVANAEATNGKHR), 701 to 720 (ESEEEEEESDSSETEKEDDE), and 818 to 864 (HPRG…QQQE). Positions 660–672 (SKPRPRKTGRRKK) are enriched in basic residues. Positions 854–864 (ESSADLPQQQE) are enriched in polar residues.

It belongs to the monovalent cation:proton antiporter 1 (CPA1) transporter (TC 2.A.36) family. Interacts with CHP1 and CHP2. Interacts with ARRB2; facilitates the endocytosis of SLC9A5 from the plasma membrane. Interacts with RACK1; this interaction positively regulates SLC9A5 activity and promotes SLC9A5 localization to focal adhesions. Interacts with SCAMP2; this interaction regulates SLC9A5 cell-surface targeting and SLC9A5 activity. Phosphorylated by PRKAA2; promotes its accumulation at the cell surface. Phosphorylated by CSNK2A1 in a manner favoring its beta-arrestin binding and endocytosis. As to expression, mainly expressed in brain. Expressed in neurons of the central and peripheral nervous system. Expressed also in testis, spleen, and skeletal muscle.

It is found in the cell membrane. It localises to the recycling endosome membrane. The protein localises to the cell projection. The protein resides in the dendritic spine membrane. Its subcellular location is the synaptic cell membrane. It is found in the cell junction. It localises to the focal adhesion. It catalyses the reaction Na(+)(in) + H(+)(out) = Na(+)(out) + H(+)(in). With respect to regulation, ATP-depletion almost completely abolishes SLC9A5 activity. Inhibited by amiloride compounds. Its function is as follows. Plasma membrane Na(+)/H(+) antiporter. Mediates the electroneutral exchange of intracellular H(+) ions for extracellular Na(+) in 1:1 stoichiometry, thus regulating intracellular pH homeostasis, in particular in neural tissues. Acts as a negative regulator of dendritic spine growth. Plays a role in postsynaptic remodeling and signaling. Can also contribute to organellar pH regulation, with consequences for receptor tyrosine kinase trafficking. This Homo sapiens (Human) protein is Sodium/hydrogen exchanger 5.